Here is a 318-residue protein sequence, read N- to C-terminus: cAMP/cGMP dual specificity phosphodiesterase MT0825 (318 aa).

Residues Asp21, His23, and Asp63 each contribute to the Fe cation site. AMP-binding positions include His23, Asp63, and 97 to 98 (NH). Residues Asp63, Asn97, His169, and His207 each coordinate Mn(2+). His209 contacts Fe cation. An AMP-binding site is contributed by His209. Positions 278-318 (PGQARRKIAESGIFIEPSRRDSLFKHPPMVLTSSAPRSPVD) are C-terminal extension.

It belongs to the cyclic nucleotide phosphodiesterase class-III family. Homodimer. It depends on Fe(3+) as a cofactor. Requires Mn(2+) as cofactor.

It localises to the cytoplasm. The protein localises to the cell membrane. Its subcellular location is the secreted. The protein resides in the cell wall. It is found in the cell envelope. The catalysed reaction is a nucleoside 2',3'-cyclic phosphate + H2O = a nucleoside 3'-phosphate + H(+). The enzyme catalyses 2',3'-cyclophospho-AMP + H2O = 3'-AMP + H(+). It catalyses the reaction 2',3'-cyclophospho-GMP + H2O = 3'-GMP + H(+). It carries out the reaction a nucleoside 3',5'-cyclic phosphate + H2O = a nucleoside 5'-phosphate + H(+). The catalysed reaction is 3',5'-cyclic AMP + H2O = AMP + H(+). The enzyme catalyses 3',5'-cyclic GMP + H2O = GMP + H(+). Functionally, cyclic nucleotide phosphodiesterase with a dual-specificity for the second messengers cAMP and cGMP. This is cAMP/cGMP dual specificity phosphodiesterase MT0825 from Mycobacterium tuberculosis (strain CDC 1551 / Oshkosh).